The primary structure comprises 459 residues: MTENQTAHVRALILDATPLITQSYTHYQNYAQSFYTTPTVFQEIKDAQARKNLEIWQSLGTLKLVHPSENSIAKVSTFAKLTGDYSVLSANDLHILALTYELEIKLNNGDWRLRKKPGDALDASKADVGTDGKQKLTEDNKKEEDSESVPKKKNKRRGGKKQKAKREAREAREAENANLELESKAEEHVEEAGSKEQICNDENIKESSDLNEVFEDADDDGDWITPENLTEAIIKDSGEDTTGSLGVEASEEDRHVALNRPENQVALATGDFAVQNVALQMNLNLMNFMSGLKIKRIRNYMLRCHACFKIFPLPKDGKPKHFCASCGGQGTLLRCAVSVDSRTGNVTPHLKSNFQWNNRGNRYSVASPLSKNSQKRYGKKGHVHSKPQENVILREDQKEYEKVIKQEEWTRRHNEKILNNWIGGGSADNYISPFAITGLKQHNVRIGKGRYVNSSKRRS.

The region spanning 10–115 is the PINc domain; sequence RALILDATPL…LNNGDWRLRK (106 aa). The segment covering 120-150 has biased composition (basic and acidic residues); the sequence is ALDASKADVGTDGKQKLTEDNKKEEDSESVP. A disordered region spans residues 120–205; that stretch reads ALDASKADVG…EQICNDENIK (86 aa). The span at 151 to 164 shows a compositional bias: basic residues; the sequence is KKKNKRRGGKKQKA. Residues 165–194 show a composition bias toward basic and acidic residues; the sequence is KREAREAREAENANLELESKAEEHVEEAGS. Zn(2+) contacts are provided by cysteine 304, cysteine 307, cysteine 323, and cysteine 326. The disordered stretch occupies residues 366–385; the sequence is ASPLSKNSQKRYGKKGHVHS. Positions 373 to 385 are enriched in basic residues; the sequence is SQKRYGKKGHVHS.

The protein belongs to the NOB1 family. As to quaternary structure, component of the small ribosomal subunit, ribosomal RNA processing complex (SSU RRP complex). Interacts with PNO1.

Its subcellular location is the cytoplasm. The protein localises to the nucleus. The protein resides in the nucleolus. It is found in the endoplasmic reticulum. Functionally, required for the synthesis of 40S ribosome subunits. Has a role in processing 20S pre-rRNA into the mature 18S rRNA, where it is required for cleavage at the 3' end of the mature 18S rRNA (D-site). Accompanies the 20S pre-rRNA from the nucleus to the cytoplasm. In association with NIN1, may promote the recruitment of the proteasome to the ribosomal subunits stalled in maturation. The sequence is that of 20S-pre-rRNA D-site endonuclease NOB1 (NOB1) from Saccharomyces cerevisiae (strain ATCC 204508 / S288c) (Baker's yeast).